Reading from the N-terminus, the 165-residue chain is Chemotaxis protein CheW (165 aa).

Belongs to the CheW family.

Functionally, plays an essential role in chemotaxis signal transduction system in order to colonize the host stomach. The chain is Chemotaxis protein CheW from Helicobacter pylori (strain ATCC 700392 / 26695) (Campylobacter pylori).